The primary structure comprises 168 residues: Photosystem I assembly protein Ycf3 (168 aa).

TPR repeat units follow at residues 35 to 68 (AFTY…EIDP), 72 to 105 (SYIL…NPFL), and 120 to 153 (GEQA…TPGN).

Belongs to the Ycf3 family.

The protein resides in the plastid. It is found in the chloroplast thylakoid membrane. In terms of biological role, essential for the assembly of the photosystem I (PSI) complex. May act as a chaperone-like factor to guide the assembly of the PSI subunits. This is Photosystem I assembly protein Ycf3 from Drimys granadensis.